The chain runs to 251 residues: Imidazole glycerol phosphate synthase subunit HisF (251 aa).

Residues aspartate 11 and aspartate 130 contribute to the active site.

The protein belongs to the HisA/HisF family. In terms of assembly, heterodimer of HisH and HisF.

The protein resides in the cytoplasm. It carries out the reaction 5-[(5-phospho-1-deoxy-D-ribulos-1-ylimino)methylamino]-1-(5-phospho-beta-D-ribosyl)imidazole-4-carboxamide + L-glutamine = D-erythro-1-(imidazol-4-yl)glycerol 3-phosphate + 5-amino-1-(5-phospho-beta-D-ribosyl)imidazole-4-carboxamide + L-glutamate + H(+). Its pathway is amino-acid biosynthesis; L-histidine biosynthesis; L-histidine from 5-phospho-alpha-D-ribose 1-diphosphate: step 5/9. IGPS catalyzes the conversion of PRFAR and glutamine to IGP, AICAR and glutamate. The HisF subunit catalyzes the cyclization activity that produces IGP and AICAR from PRFAR using the ammonia provided by the HisH subunit. In Chlorobaculum tepidum (strain ATCC 49652 / DSM 12025 / NBRC 103806 / TLS) (Chlorobium tepidum), this protein is Imidazole glycerol phosphate synthase subunit HisF.